We begin with the raw amino-acid sequence, 238 residues long: Ribosomal RNA small subunit methyltransferase G (238 aa).

S-adenosyl-L-methionine contacts are provided by residues Gly-77, Phe-82, 128–129 (AE), and Arg-146. A disordered region spans residues 216 to 238 (KKRQTPKKYPRKPGTPNKEPLLK).

Belongs to the methyltransferase superfamily. RNA methyltransferase RsmG family.

It is found in the cytoplasm. Functionally, specifically methylates the N7 position of guanine in position 535 of 16S rRNA. This is Ribosomal RNA small subunit methyltransferase G from Macrococcus caseolyticus (strain JCSC5402) (Macrococcoides caseolyticum).